Reading from the N-terminus, the 619-residue chain is 2-isopropylmalate synthase (619 aa).

The 276-residue stretch at 61-336 (PRWLSTDLRD…SPNLDFSDLT (276 aa)) folds into the Pyruvate carboxyltransferase domain. Residues aspartate 70, histidine 275, histidine 277, and asparagine 311 each coordinate a divalent metal cation.

It belongs to the alpha-IPM synthase/homocitrate synthase family. LeuA type 2 subfamily. Homodimer. It depends on a divalent metal cation as a cofactor.

The protein localises to the cytoplasm. Its subcellular location is the mitochondrion. It carries out the reaction 3-methyl-2-oxobutanoate + acetyl-CoA + H2O = (2S)-2-isopropylmalate + CoA + H(+). It participates in amino-acid biosynthesis; L-leucine biosynthesis; L-leucine from 3-methyl-2-oxobutanoate: step 1/4. Functionally, catalyzes the condensation of the acetyl group of acetyl-CoA with 3-methyl-2-oxobutanoate (2-oxoisovalerate) to form 3-carboxy-3-hydroxy-4-methylpentanoate (2-isopropylmalate). The polypeptide is 2-isopropylmalate synthase (LEU4) (Saccharomyces cerevisiae (strain ATCC 204508 / S288c) (Baker's yeast)).